A 149-amino-acid chain; its full sequence is Transcriptional repressor NrdR (149 aa).

Residues 3-34 fold into a zinc finger; the sequence is CPFCSAVDTKVIDSRLVGEGSQVRRRRQCLVC. The region spanning 49-139 is the ATP-cone domain; sequence PRVIKSNEVR…VYRSFEDIRE (91 aa).

Belongs to the NrdR family. Requires Zn(2+) as cofactor.

Negatively regulates transcription of bacterial ribonucleotide reductase nrd genes and operons by binding to NrdR-boxes. The polypeptide is Transcriptional repressor NrdR (Pectobacterium carotovorum subsp. carotovorum (strain PC1)).